We begin with the raw amino-acid sequence, 465 residues long: Protein maelstrom (465 aa).

A DNA-binding region (HMG box) is located at residues 2-69 (APKKHSGFMM…ADRGKRERLN (68 aa)). Residues 415-440 (MRKSSKHTGPSVSTQRERNAGAWNLP) are disordered.

The protein belongs to the maelstrom family.

It localises to the cytoplasm. The protein resides in the nucleus. In terms of biological role, involved both in the piRNA and miRNA metabolic processes. As a component of the meiotic nuage, plays a central role during oogenesis by repressing transposable elements and preventing their mobilization, which is essential for the germline integrity. Repression of transposable elements is mediated via the piRNA metabolic process, which mediates the repression of transposable elements during meiosis by forming complexes composed of piRNAs and Piwi proteins and governs the repression of transposons. As a nuclear component, it is required for proper differentiation in the germline stem cell (GSC) lineage by repressing microRNA-7 (miR-7), thereby acting as an indirect regulator of bag-of-marbles (Bam). Acts by binding to the promoter of miR-7 gene and repressing its expression; miR-7 repression alleviates the Bam repression by miR-7, thereby allowing differentiation in the germline stem cell (GSC) lineage. This chain is Protein maelstrom (mael), found in Drosophila yakuba (Fruit fly).